Here is a 178-residue protein sequence, read N- to C-terminus: MTYQQAGRIAVLKRILGWVIFIPALISTLISLLKFMNTRQENKEGINAVMLDFTHVMIDMMQANTPFLNLFWYNSPTPNFNGGVNVMFWVIFILIFVGLALQDSGARMSRQARFLREGVEDQLILEKAKGEEGLTREQIESRIVVPHHTIFLQFFSLYILPVICIAAGYVFFSLLGFI.

3 consecutive transmembrane segments (helical) span residues 15 to 35 (ILGW…LLKF), 80 to 100 (FNGG…VGLA), and 158 to 178 (YILP…LGFI).

The protein to Y.pestis YfeE.

The protein resides in the cell membrane. This is an uncharacterized protein from Escherichia coli (strain K12).